Consider the following 143-residue polypeptide: Large ribosomal subunit protein uL11 (143 aa).

Belongs to the universal ribosomal protein uL11 family. Part of the ribosomal stalk of the 50S ribosomal subunit. Interacts with L10 and the large rRNA to form the base of the stalk. L10 forms an elongated spine to which L12 dimers bind in a sequential fashion forming a multimeric L10(L12)X complex. One or more lysine residues are methylated.

In terms of biological role, forms part of the ribosomal stalk which helps the ribosome interact with GTP-bound translation factors. This chain is Large ribosomal subunit protein uL11, found in Rhizorhabdus wittichii (strain DSM 6014 / CCUG 31198 / JCM 15750 / NBRC 105917 / EY 4224 / RW1) (Sphingomonas wittichii).